Here is a 438-residue protein sequence, read N- to C-terminus: Argininosuccinate lyase (438 aa).

Belongs to the lyase 1 family. Argininosuccinate lyase subfamily.

The protein resides in the cytoplasm. The enzyme catalyses 2-(N(omega)-L-arginino)succinate = fumarate + L-arginine. Its pathway is amino-acid biosynthesis; L-arginine biosynthesis; L-arginine from L-ornithine and carbamoyl phosphate: step 3/3. The sequence is that of Argininosuccinate lyase from Clostridium tetani (strain Massachusetts / E88).